Reading from the N-terminus, the 677-residue chain is Serine/threonine-protein kinase YPK2/YKR2 (677 aa).

The segment covering 1–12 (MHSWRISKFKLG) has biased composition (basic residues). The interval 1-115 (MHSWRISKFK…ETQGPSSESG (115 aa)) is disordered. Residues 41-56 (KHHDGSPKNHNHEHEH) are compositionally biased toward basic and acidic residues. Composition is skewed to polar residues over residues 61–93 (INTN…NDNS) and 101–115 (SQSS…SESG). Phosphothreonine occurs at positions 63 and 66. At Ser72 the chain carries Phosphoserine. The Protein kinase domain maps to 344-599 (FDLLKVIGKG…TDEIRNHPFF (256 aa)). Residues 350 to 358 (IGKGSFGKV) and Lys373 each bind ATP. The Proton acceptor role is filled by Asp467. Thr499 bears the Phosphothreonine mark. A Phosphothreonine; by PKH2 modification is found at Thr501. Residues 600–670 (KDISWKKLLL…IGDEQLGDSP (71 aa)) enclose the AGC-kinase C-terminal domain. A Phosphoserine; by TOR2 modification is found at Ser641. Ser650 is modified (phosphoserine). Position 659 is a phosphothreonine; by TOR2 (Thr659). Ser669 carries the post-translational modification Phosphoserine.

Belongs to the protein kinase superfamily. AGC Ser/Thr protein kinase family. RAC subfamily. Post-translationally, autophosphorylated. Phosphorylated by PKH2 and TOR2.

It is found in the cytoplasm. The catalysed reaction is L-seryl-[protein] + ATP = O-phospho-L-seryl-[protein] + ADP + H(+). The enzyme catalyses L-threonyl-[protein] + ATP = O-phospho-L-threonyl-[protein] + ADP + H(+). With respect to regulation, activated by phytosphingosine (PHS), a sphingoid long chain base. Activated by PKH2 phosphorylation. Kinase activity is regulated by TOR2 via direct phosphorylation of Ser-641 and Thr-659. Plays an essential role in the proliferation of yeast cells. Involved in a signaling pathway, required for optimal cell wall integrity, that acts in parallel with the PKC1-SLT2-dependent pathway. A substrate of TOR complex 2 (TORC2) and required for TORC2 to regulate spatial aspects of cell growth. Phosphorylation of residue Thr-501 is indispensable for function. May act as a downstream kinase in the sphingolipid-mediated signaling pathway. This Saccharomyces cerevisiae (strain ATCC 204508 / S288c) (Baker's yeast) protein is Serine/threonine-protein kinase YPK2/YKR2 (YPK2).